We begin with the raw amino-acid sequence, 345 residues long: Cell division control protein 2 homolog 2 (345 aa).

Residues 1 to 44 (MQVQVQEGQTACDGSLRPLPSAGPASFVPRSLRPAPLRGTSTPD) form a disordered region. A Protein kinase domain is found at 46–328 (YSRIEKVGEG…AYEALQHSYF (283 aa)). Residues 52 to 60 (VGEGSYGIV) and lysine 75 contribute to the ATP site. A Phosphoserine modification is found at serine 56. At tyrosine 57 the chain carries Phosphotyrosine. Aspartate 168 functions as the Proton acceptor in the catalytic mechanism.

It belongs to the protein kinase superfamily. CMGC Ser/Thr protein kinase family. CDC2/CDKX subfamily. As to quaternary structure, forms a stable but non-covalent complex with a regulatory subunit and with a cyclin.

The enzyme catalyses L-seryl-[protein] + ATP = O-phospho-L-seryl-[protein] + ADP + H(+). It carries out the reaction L-threonyl-[protein] + ATP = O-phospho-L-threonyl-[protein] + ADP + H(+). Phosphorylation at Ser-56 or Tyr-57 inactivates the enzyme. Its function is as follows. Probably involved in the control of the cell cycle. The sequence is that of Cell division control protein 2 homolog 2 (CRK2) from Trypanosoma brucei brucei.